Reading from the N-terminus, the 349-residue chain is Ribonucleoside-diphosphate reductase small chain (349 aa).

Positions 99, 130, and 133 each coordinate Fe cation. Tyr-137 is a catalytic residue. Residues Glu-192, Glu-226, and His-229 each contribute to the Fe cation site.

Belongs to the ribonucleoside diphosphate reductase small chain family. As to quaternary structure, heterodimer of a large and a small subunit. Fe cation is required as a cofactor.

It carries out the reaction a 2'-deoxyribonucleoside 5'-diphosphate + [thioredoxin]-disulfide + H2O = a ribonucleoside 5'-diphosphate + [thioredoxin]-dithiol. Its function is as follows. Provides the precursors necessary for DNA synthesis. Catalyzes the biosynthesis of deoxyribonucleotides from the corresponding ribonucleotides. In Plasmodium falciparum (isolate Dd2), this protein is Ribonucleoside-diphosphate reductase small chain (RNR2).